Consider the following 168-residue polypeptide: Ubiquitin-conjugating enzyme E2 7 (168 aa).

The tract at residues 1–21 is disordered; sequence MATAPARRASSSRSSSEISRT. The region spanning 6-166 is the UBC core domain; it reads ARRASSSRSS…VRRAVRKSQE (161 aa). Cys92 functions as the Glycyl thioester intermediate in the catalytic mechanism.

Belongs to the ubiquitin-conjugating enzyme family.

The enzyme catalyses S-ubiquitinyl-[E1 ubiquitin-activating enzyme]-L-cysteine + [E2 ubiquitin-conjugating enzyme]-L-cysteine = [E1 ubiquitin-activating enzyme]-L-cysteine + S-ubiquitinyl-[E2 ubiquitin-conjugating enzyme]-L-cysteine.. It functions in the pathway protein modification; protein ubiquitination. In terms of biological role, catalyzes the covalent attachment of ubiquitin to other proteins so as to signal them for selective protein degradation. Involved in the formation of multiubiquitin chains. The chain is Ubiquitin-conjugating enzyme E2 7 (UBC7) from Triticum aestivum (Wheat).